A 37-amino-acid chain; its full sequence is U12-myrmicitoxin-Mri1a (37 aa).

The N-terminal stretch at 1 to 23 (MKTIELITIFAMITTLMVTVVAG) is a signal peptide. The propeptide occupies 24 to 25 (DP). Valine amide is present on Val35.

Expressed by the venom gland.

It is found in the secreted. Functionally, toxin that induces mild paralysis, and reduces survival and reproduction when injected into aphids (A.pisum). May affect various processes in the aphid, including wound healing and hemolymph coagulation. It does not increase the sensitivity of the aphids to the chemical insecticides imidacloprid, methomyl and Spirotetramat. Has no insecticidal activity when injected into blowfly (L.caesar). Does not display any antibacterial or antifungal activity. This Manica rubida (European giant red ant) protein is U12-myrmicitoxin-Mri1a.